The sequence spans 224 residues: 4'-phosphopantetheinyl transferase ffp (224 aa).

Mg(2+)-binding residues include D107, E109, and E151. Residues G158–C189 are peptidyl carrier protein binding.

The protein belongs to the P-Pant transferase superfamily. Gsp/Sfp/HetI/AcpT family. It depends on Mg(2+) as a cofactor.

The enzyme catalyses apo-[peptidyl-carrier protein] + CoA = holo-[peptidyl-carrier protein] + adenosine 3',5'-bisphosphate + H(+). Functionally, may activate the peptidyl carrier protein (PCP) domains of fengycin synthase by transferring the 4'-phosphopantetheinyl moiety of coenzyme A (CoA) to a serine residue. This is 4'-phosphopantetheinyl transferase ffp (ffp) from Bacillus subtilis.